Consider the following 891-residue polypeptide: MLPKNYDPNEIEPKWQKYWLEEKIYKYKLEPDKPSYAIDTPPPFTSGTLHLGHVLSHTWIDIIARYKRMRGYNVLFPQGFDNHGLPTELKVEKEFGISKDQPEEFLKKCIEWTWQAIEKMRAQFIRIGYSADWDLEYHTMDDWYKAAVQKSLLDFYKKGLIYREEHPVYWCPRCRTSLAKAEVGYVEEEGYLYYIKLPLADGSGYIPIATTRPELMPACVAVFVHPDDERYKHLVGKKVKLPIYEREVPILADEDVDPNFGTGAVYNCTYGDEQDIVWQKRYNLPVIIAINEDGTMNENAGPYAGLKIEEARKKIAEDLEKMGLLYKKEKITHRVLRHTERSSCMAPIELLPKKQWFIKVREFTDDIVEVAKKINWYPEDMFLRLKDWAESMDWDWVISRQRVFGTPIPFWICKNGHIIPAREEDLPVDPRFDKPPVEKCPVCGAEIEPVTDVLDCWVDSSITPLIITKWHEAIKGDEEAKKWFEHNFPTALRPQGTDIIRTWAFYTIFRTYMLTGEKPWNDIVINGMVAGPDGRKMSKSYGNVVSPEEVIPKYGADALRLWTALAPPGEDHPFKWEIVDYNFRFLQKLWNIYRFAERHIKDFDYEKYKHIELEPLDRWILSRLHRIIKFATEELEKYRFNLITRELMTFIWHEVADDYIEMIKHRLYGEDEESKLKAKVALYELLYNIMLLLAPFVPHITEELYHHIFKEKIGEKSVHLLQWPEYREDRIDEEAEKIGELAREIVSAMRKYKNSHGMPLNAKLKHVAIYATDSYEMLKVIEKDIAGTMNIERLEIVKGEPQLEEKVVEIKPIYKRIGPRYGKLVPKIVKHLQENAEEIGRRIKEEGKVEFEVEGQKVVLEKEDIEIKKAVFSEGEEVETAVVRDATILFF.

The short motif at 43-53 is the 'HIGH' region element; sequence PFTSGTLHLGH. The 'KMSKS' region motif lies at 536-540; that stretch reads KMSKS. Lysine 539 lines the ATP pocket.

The protein belongs to the class-I aminoacyl-tRNA synthetase family. ValS type 2 subfamily.

It is found in the cytoplasm. It catalyses the reaction tRNA(Val) + L-valine + ATP = L-valyl-tRNA(Val) + AMP + diphosphate. Functionally, catalyzes the attachment of valine to tRNA(Val). As ValRS can inadvertently accommodate and process structurally similar amino acids such as threonine, to avoid such errors, it has a 'posttransfer' editing activity that hydrolyzes mischarged Thr-tRNA(Val) in a tRNA-dependent manner. This is Valine--tRNA ligase from Pyrococcus furiosus (strain ATCC 43587 / DSM 3638 / JCM 8422 / Vc1).